Consider the following 679-residue polypeptide: Sodium-dependent phosphate transporter 1 (679 aa).

The next 6 helical transmembrane spans lie at 21-41 (YLWMLILGFIIAFVLAFSVGA), 62-82 (ACILASIFETVGSVLLGAKVS), 100-120 (GLLMAGSVSAMFGSAVWQLVA), 158-178 (IVMSWFVSPLLSGIMSGILFF), 203-223 (ACTVGINLFSIMYTGAPLLGF), and 230-250 (GTILISVGCAVFCALIVWFFV). 2 positions are modified to phosphoserine: Ser265 and Ser269. The next 4 membrane-spanning stretches (helical) occupy residues 511–531 (VSLLFQFLQILTACFGSFAHG), 558–578 (VATPIWLLLYGGVGICVGLWV), 600–620 (FSIELASALTVVIASNIGLPI), and 650–670 (IFMAWFVTVPISGVISAAIMA). The tract at residues 550 to 558 (DTGDVSSKV) is a.

This sequence belongs to the inorganic phosphate transporter (PiT) (TC 2.A.20) family. In terms of tissue distribution, ubiquitously expressed.

It localises to the cell membrane. The enzyme catalyses 2 Na(+)(out) + phosphate(out) = 2 Na(+)(in) + phosphate(in). In terms of biological role, sodium-phosphate symporter which preferentially transports the monovalent form of phosphate with a stoichiometry of two sodium ions per phosphate ion. May play a role in extracellular matrix and cartilage calcification as well as in vascular calcification. Essential for cell proliferation but this function is independent of its phosphate transporter activity. Its function is as follows. (Microbial infection) May function as a retroviral receptor as it confers human cells susceptibility to infection to Gibbon Ape Leukemia Virus (GaLV), Simian sarcoma-associated virus (SSAV) and Feline leukemia virus subgroup B (FeLV-B) as well as 10A1 murine leukemia virus (10A1 MLV). In Homo sapiens (Human), this protein is Sodium-dependent phosphate transporter 1 (SLC20A1).